The primary structure comprises 713 residues: Early transcription factor 82 kDa subunit (713 aa).

Belongs to the poxviridae VETF large subunit family. Heterodimer of a 70 kDa and a 82 kDa subunit. Part of the early transcription complex composed of ETF, RAP94, and the DNA-directed RNA polymerase.

Its function is as follows. Acts with RNA polymerase to initiate transcription from early gene promoters. Is recruited by the RPO-associated protein of 94 kDa (RAP94) to form the early transcription complex, which also contains the core RNA polymerase. ETF heterodimer binds to early gene promoters. This chain is Early transcription factor 82 kDa subunit (VETFL), found in Yaba monkey tumor virus (strain VR587) (YMTV).